Here is a 398-residue protein sequence, read N- to C-terminus: Protochlorophyllide reductase, chloroplastic (398 aa).

This sequence belongs to the short-chain dehydrogenases/reductases (SDR) family. POR subfamily.

It is found in the plastid. It localises to the chloroplast. It carries out the reaction chlorophyllide a + NADP(+) = protochlorophyllide a + NADPH + H(+). It participates in porphyrin-containing compound metabolism; chlorophyll biosynthesis. Phototransformation of protochlorophyllide (Pchlide) to chlorophyllide (Chlide). The chain is Protochlorophyllide reductase, chloroplastic (POR1) from Daucus carota (Wild carrot).